A 104-amino-acid chain; its full sequence is MASKIRRDDEVIILAGKDKGKTGKVTKVLVEDGKVFVEGINLIKKHTKPVPQLQQPGGIVEKEAPLQVSNVAIVNSATGKADRVGFRIEDGKKVRFFKSNNELI.

The protein belongs to the universal ribosomal protein uL24 family. Part of the 50S ribosomal subunit.

Its function is as follows. One of two assembly initiator proteins, it binds directly to the 5'-end of the 23S rRNA, where it nucleates assembly of the 50S subunit. In terms of biological role, one of the proteins that surrounds the polypeptide exit tunnel on the outside of the subunit. The sequence is that of Large ribosomal subunit protein uL24 from Colwellia psychrerythraea (strain 34H / ATCC BAA-681) (Vibrio psychroerythus).